The sequence spans 2109 residues: General transcription factor 3C polypeptide 1 (2109 aa).

Positions 467 to 521 (LPEGEDTFLSESDSEEERSSSKRRGRGSQKDTRASANLRPKTQPHHSTPTKGGWK) are disordered. Residues 469 to 482 (EGEDTFLSESDSEE) are compositionally biased toward acidic residues. Lysine 529 is covalently cross-linked (Glycyl lysine isopeptide (Lys-Gly) (interchain with G-Cter in SUMO2)). Residues 586–609 (MENPKESSSSLKTGRHSSGQDKPH) form a disordered region. Serine 667 bears the Phosphoserine mark. The segment covering 718–727 (STANRVKTSQ) has biased composition (polar residues). Positions 718–775 (STANRVKTSQPPVPQGEAEEDSQGKEGPSGSGDSQLSASSRSESGRMKKSDNKMGITP) are disordered. Serine 739 is modified (phosphoserine). Low complexity predominate over residues 748-759 (SGDSQLSASSRS). Basic and acidic residues predominate over residues 760–769 (ESGRMKKSDN). Residues lysine 770 and lysine 833 each participate in a glycyl lysine isopeptide (Lys-Gly) (interchain with G-Cter in SUMO2) cross-link. Disordered regions lie at residues 836–857 (SGRA…SEAP) and 1059–1082 (RKNS…ESAM). Residues serine 1062 and serine 1068 each carry the phosphoserine modification. Residues 1073–1082 (SLQKEQESAM) show a composition bias toward basic and acidic residues. Residue lysine 1142 forms a Glycyl lysine isopeptide (Lys-Gly) (interchain with G-Cter in SUMO2) linkage. The disordered stretch occupies residues 1202–1241 (SLDRNRRVRGGKSQKRKRLKKDPGKKIKRKKKGEFPGEKS). Over residues 1207–1221 (RRVRGGKSQKRKRLK) the composition is skewed to basic residues. A phosphoserine mark is found at serine 1253 and serine 1611. Residues 1608–1631 (KDGSLEDDEDEEDDLDEGVGGKRR) are disordered. Positions 1612–1624 (LEDDEDEEDDLDE) are enriched in acidic residues. Phosphoserine occurs at positions 1632 and 1653. A compositionally biased stretch (basic and acidic residues) spans 1823 to 1833 (EDADIQREDPQ). A disordered region spans residues 1823 to 1961 (EDADIQREDP…GSEDPRGFTE (139 aa)). The segment covering 1838-1848 (EGSSSEDSPPE) has biased composition (low complexity). Serine 1856, serine 1865, serine 1868, serine 1896, and serine 1911 each carry phosphoserine. Positions 1916 to 1926 (LEDTAAAGAAQ) are enriched in low complexity. Over residues 1937-1947 (SPGQEQLSGQA) the composition is skewed to polar residues. Residue serine 1969 is modified to Phosphoserine.

It belongs to the TFIIIC subunit 1 family. In terms of assembly, part of the TFIIIC subcomplex TFIIIC2, consisting of six subunits, GTF3C1, GTF3C2, GTF3C3, GTF3C4, GTF3C5 and GTF3C6. Interacts with IGHMBP2. Interacts with MAF1.

It localises to the nucleus. Functionally, required for RNA polymerase III-mediated transcription. Component of TFIIIC that initiates transcription complex assembly on tRNA and is required for transcription of 5S rRNA and other stable nuclear and cytoplasmic RNAs. Binds to the box B promoter element. This is General transcription factor 3C polypeptide 1 (GTF3C1) from Homo sapiens (Human).